The sequence spans 202 residues: Small ribosomal subunit protein uS4c (202 aa).

The 64-residue stretch at 89–152 (MRLDNIIFRL…QSNTFINNCI (64 aa)) folds into the S4 RNA-binding domain.

It belongs to the universal ribosomal protein uS4 family. In terms of assembly, part of the 30S ribosomal subunit. Contacts protein S5. The interaction surface between S4 and S5 is involved in control of translational fidelity.

It localises to the plastid. One of the primary rRNA binding proteins, it binds directly to 16S rRNA where it nucleates assembly of the body of the 30S subunit. Its function is as follows. With S5 and S12 plays an important role in translational accuracy. The protein is Small ribosomal subunit protein uS4c (rps4) of Epifagus virginiana (Beechdrops).